The primary structure comprises 197 residues: Putative RNA-binding protein EEED8.12 (197 aa).

The RRM domain maps to 61 to 138 (KSVFIGNVDF…RPIVVTAKRT (78 aa)). The disordered stretch occupies residues 142 to 166 (GMGHGVRGSSRGTFGRGRGAARGAP).

The polypeptide is Putative RNA-binding protein EEED8.12 (Caenorhabditis elegans).